The primary structure comprises 239 residues: Endonuclease V (239 aa).

Mg(2+)-binding residues include Asp50 and Asp118.

It belongs to the endonuclease V family. Requires Mg(2+) as cofactor.

The protein localises to the cytoplasm. The enzyme catalyses Endonucleolytic cleavage at apurinic or apyrimidinic sites to products with a 5'-phosphate.. Functionally, DNA repair enzyme involved in the repair of deaminated bases. Selectively cleaves double-stranded DNA at the second phosphodiester bond 3' to a deoxyinosine leaving behind the intact lesion on the nicked DNA. In Xylella fastidiosa (strain Temecula1 / ATCC 700964), this protein is Endonuclease V.